A 776-amino-acid polypeptide reads, in one-letter code: Peregrinol diphosphate synthase CPS1, chloroplastic (776 aa).

Residues 1 to 17 (MASTPTLNLSITTPFVR) constitute a chloroplast transit peptide. Lys-238 is a substrate binding site. The Mg(2+) site is built by Asp-371 and Asp-373. Residues 371–374 (DIDD) carry the DXDD motif motif. A substrate-binding site is contributed by Lys-457.

It belongs to the terpene synthase family. It depends on Mg(2+) as a cofactor. In terms of tissue distribution, present in both leaves and flowers, with higher levels in leaves.

It is found in the plastid. It localises to the chloroplast. It carries out the reaction peregrinol diphosphate = (2E,6E,10E)-geranylgeranyl diphosphate + H2O. Its pathway is secondary metabolite biosynthesis; terpenoid biosynthesis. Functionally, involved in the biosynthesis of labdane-type diterpenoid including marrubiin and other labdane-related furanoid diterpenoids with potential applications as anti-diabetics, analgesics or vasorelaxants. Terpene synthase that produces peregrinol diphosphate from geranylgeranyl diphosphate (GGPP). This Marrubium vulgare (White horehound) protein is Peregrinol diphosphate synthase CPS1, chloroplastic.